A 532-amino-acid polypeptide reads, in one-letter code: MAGGGAPAPKADEPQPHPPKDQLPNISYCITSPPPWPEAILLGFQHYLVMLGTTVLIPTALVPQMGGGYEEKAKVIQTILFVAGINTLLQTLFGTRLPAVVGASYTFVPTTISIILSGRFSDTSNPIDRFERIMRATQGALIVASTLQMILGFSGLWRNVVRFLSPISAVPLVGLVGFGLYEFGFPGVAKCIEIGLPELLILVFVSQYLPHVIKSGKNVFDRFAVIFAVVIVWIYAHLLTVGGAYNGAAPTTQTSCRTDRAGIIGAAPWIRVPWPFQWGAPSFDAGEAFAMMMASFVALVESTGAFVAVSRYASATMLPPSILSRGIGWQGVAILISGLFGTGAGSSVSVENAGLLALTRVGSRRVVQIAAGFMIFFSILGKFGAVFASIPAPIIAALYCLFFAYVGAGGLSFLQFCNLNSFRTKFILGFSVFLGLSIPQYFNEYTAIKGYGPVHTGARWFNDMVNVPFSSEPFVAGSVAFFLDNTLHKKDSSIRKDRGKHWWDKFRSFKGDTRSEEFYSLPFNLNKYFPSV.

The tract at residues 1 to 24 is disordered; it reads MAGGGAPAPKADEPQPHPPKDQLP. The span at 10 to 20 shows a compositional bias: basic and acidic residues; it reads KADEPQPHPPK. A run of 12 helical transmembrane segments spans residues 39-59, 75-95, 97-117, 137-157, 163-185, 192-212, 223-243, 289-309, 361-381, 392-414, 426-446, and 463-483; these read AILL…LIPT, VIQT…LFGT, LPAV…IILS, TQGA…SGLW, FLSP…EFGF, IEIG…LPHV, FAVI…TVGG, FAMM…FVAV, VGSR…SILG, APII…LSFL, FILG…NEYT, and DMVN…AFFL.

It belongs to the nucleobase:cation symporter-2 (NCS2) (TC 2.A.40) family. Expressed in the apical region of cotyledons 4 days after imbibition (DAI). Expressed in the whole vasculature at 12 DAI. Expressed in the root central cylinder and lateral root primordia. Expressed in the vasculature of sepals, filaments, carpels and developing siliques.

The protein localises to the membrane. This is Nucleobase-ascorbate transporter 6 (NAT6) from Arabidopsis thaliana (Mouse-ear cress).